A 700-amino-acid polypeptide reads, in one-letter code: MAEGQSPENSPPSPTPPSPSSSDNQQQSSPPPSDSSSPSPPAPPPPDDSSNGSPQPPSSDSQSPPSPQGNNNNDGNNGNNNNDNNNNNNGNNNNDNNNGNNKDNNNNGNNNNGNNNNGNDNNGNNNNGNNNDNNNQNNGGGSNNRSPPPPSRNSDRNSPSPPRALAPPRSSGGGSNSSGNNEPNTAAIVGIVAGAGLLFLVMILFCVCCCRKKKKKHQMPYYAGNGYATGKGDQYQQQQYNNQSDHVMNLSQQYPGSNGNNNWMNSPPPPPPGSWQPSPPPPPPPVSGGMNGNSSDFSSNYSGPHGPSVPPPHPSVALGFNKSTFTYDELAAATQGFSQSRLLGQGGFGYVHKGILPNGKEIAVKSLKAGSGQGEREFQAEVDIISRVHHRFLVSLVGYCIAGGQRMLVYEFLPNDTLEFHLHGKSGKVLDWPTRLKIALGSAKGLAYLHEDCHPRIIHRDIKASNILLDESFEAKVADFGLAKLSQDNVTHVSTRIMGTFGYLAPEYASSGKLTDRSDVFSFGVMLLELVTGRRPVDLTGEMEDSLVDWARPICLNAAQDGDYSELVDPRLENQYEPHEMAQMVACAAAAVRHSARRRPKMSQIVRALEGDATLDDLSEGGKAGQSSFLGRGSSSDYDSSTYSADMKKFRKVALDSHEYGASSEYGNTSEYGLDPSSSSSEEIRRGGANNNKTTPSRDH.

The tract at residues 1–180 (MAEGQSPENS…SGGGSNSSGN (180 aa)) is disordered. Residues 1–186 (MAEGQSPENS…SSGNNEPNTA (186 aa)) are Extracellular-facing. Pro residues-rich tracts occupy residues 9 to 19 (NSPPSPTPPSP) and 29 to 47 (SPPP…PPPD). Positions 48-137 (DSSNGSPQPP…GNNNDNNNQN (90 aa)) are enriched in low complexity. Asn176 carries N-linked (GlcNAc...) asparagine glycosylation. Residues 187 to 207 (AIVGIVAGAGLLFLVMILFCV) traverse the membrane as a helical segment. Over 208–700 (CCCRKKKKKH…NNKTTPSRDH (493 aa)) the chain is Cytoplasmic. Residues 249–315 (NLSQQYPGSN…GPSVPPPHPS (67 aa)) are disordered. Residues 255 to 265 (PGSNGNNNWMN) show a composition bias toward low complexity. The span at 266-286 (SPPPPPPGSWQPSPPPPPPPV) shows a compositional bias: pro residues. Position 326 is a phosphothreonine (Thr326). One can recognise a Protein kinase domain in the interval 337 to 615 (FSQSRLLGQG…VRALEGDATL (279 aa)). ATP-binding positions include 343–351 (LGQGGFGYV) and Lys365. Residue Tyr410 is modified to Phosphotyrosine. Asp461 (proton acceptor) is an active-site residue. Residues Ser465 and Ser494 each carry the phosphoserine modification. Phosphothreonine occurs at positions 495 and 500. Tyr508 carries the phosphotyrosine modification. 2 disordered regions span residues 616 to 642 (DDLS…DSST) and 659 to 700 (EYGA…SRDH). The span at 689–700 (ANNNKTTPSRDH) shows a compositional bias: polar residues.

This sequence belongs to the protein kinase superfamily. Ser/Thr protein kinase family. Mostly expressed in flower buds.

The protein resides in the cell membrane. The catalysed reaction is L-seryl-[protein] + ATP = O-phospho-L-seryl-[protein] + ADP + H(+). The enzyme catalyses L-threonyl-[protein] + ATP = O-phospho-L-threonyl-[protein] + ADP + H(+). This is Putative proline-rich receptor-like protein kinase PERK6 (PERK6) from Arabidopsis thaliana (Mouse-ear cress).